The following is a 306-amino-acid chain: Homoserine kinase (306 aa).

91–101 (PLARGLGSSAT) provides a ligand contact to ATP.

Belongs to the GHMP kinase family. Homoserine kinase subfamily.

The protein resides in the cytoplasm. The enzyme catalyses L-homoserine + ATP = O-phospho-L-homoserine + ADP + H(+). Its pathway is amino-acid biosynthesis; L-threonine biosynthesis; L-threonine from L-aspartate: step 4/5. In terms of biological role, catalyzes the ATP-dependent phosphorylation of L-homoserine to L-homoserine phosphate. The polypeptide is Homoserine kinase (Synechocystis sp. (strain ATCC 27184 / PCC 6803 / Kazusa)).